The primary structure comprises 686 residues: tRNA (guanine(37)-N(1))-methyltransferase (686 aa).

A disordered region spans residues 206 to 244 (GGPSSVSLTEDTDGSEQPQGLPRAAAAPPPPSNKRRASY). S-adenosyl-L-methionine-binding positions include H428, 466 to 467 (DL), 495 to 496 (DG), and N530.

Belongs to the class I-like SAM-binding methyltransferase superfamily. TRM5/TYW2 family. In terms of assembly, monomer.

The protein resides in the mitochondrion matrix. It localises to the nucleus. Its subcellular location is the cytoplasm. The enzyme catalyses guanosine(37) in tRNA + S-adenosyl-L-methionine = N(1)-methylguanosine(37) in tRNA + S-adenosyl-L-homocysteine + H(+). In terms of biological role, specifically methylates the N1 position of guanosine-37 in various cytoplasmic and mitochondrial tRNAs. Methylation is not dependent on the nature of the nucleoside 5' of the target nucleoside. This is the first step in the biosynthesis of wybutosine (yW), a modified base adjacent to the anticodon of tRNAs and required for accurate decoding. The sequence is that of tRNA (guanine(37)-N(1))-methyltransferase from Leishmania major.